We begin with the raw amino-acid sequence, 156 residues long: MKLQLVAVGTKMPDWVQTGFMEYLRRFPKDMPFELTEVPAGKRGKNADIKRILEKEGEMMLAATGKGNRIVTLDIPGQPWETPQLASQLERWKQDGRDVSLLIGGPEGLSPACKAAAEQSWSLSALTLPHPLVRVLVAESLYRAWSITANHPYHRE.

S-adenosyl-L-methionine contacts are provided by residues Leu-73, Gly-104, and 123–128 (LSALTL).

The protein belongs to the RNA methyltransferase RlmH family. In terms of assembly, homodimer.

It is found in the cytoplasm. It carries out the reaction pseudouridine(1915) in 23S rRNA + S-adenosyl-L-methionine = N(3)-methylpseudouridine(1915) in 23S rRNA + S-adenosyl-L-homocysteine + H(+). Specifically methylates the pseudouridine at position 1915 (m3Psi1915) in 23S rRNA. The protein is Ribosomal RNA large subunit methyltransferase H of Erwinia tasmaniensis (strain DSM 17950 / CFBP 7177 / CIP 109463 / NCPPB 4357 / Et1/99).